The sequence spans 149 residues: Transcriptional repressor NrdR (149 aa).

A zinc finger spans residues 3-34 (CPFCDTEETKVIDSRLVSDGYQVRRRRECGHC). The region spanning 49-139 (PKIIKTDGTR…VYLSFDDIDQ (91 aa)) is the ATP-cone domain.

This sequence belongs to the NrdR family. Requires Zn(2+) as cofactor.

In terms of biological role, negatively regulates transcription of bacterial ribonucleotide reductase nrd genes and operons by binding to NrdR-boxes. The sequence is that of Transcriptional repressor NrdR from Haemophilus influenzae (strain PittEE).